Here is a 337-residue protein sequence, read N- to C-terminus: Phosphate acyltransferase (337 aa).

This sequence belongs to the PlsX family. As to quaternary structure, homodimer. Probably interacts with PlsY.

Its subcellular location is the cytoplasm. The enzyme catalyses a fatty acyl-[ACP] + phosphate = an acyl phosphate + holo-[ACP]. Its pathway is lipid metabolism; phospholipid metabolism. Its function is as follows. Catalyzes the reversible formation of acyl-phosphate (acyl-PO(4)) from acyl-[acyl-carrier-protein] (acyl-ACP). This enzyme utilizes acyl-ACP as fatty acyl donor, but not acyl-CoA. The sequence is that of Phosphate acyltransferase from Halalkalibacterium halodurans (strain ATCC BAA-125 / DSM 18197 / FERM 7344 / JCM 9153 / C-125) (Bacillus halodurans).